Consider the following 306-residue polypeptide: Pantothenate kinase (306 aa).

91–98 (GSVAVGKS) lines the ATP pocket.

Belongs to the prokaryotic pantothenate kinase family.

It localises to the cytoplasm. The catalysed reaction is (R)-pantothenate + ATP = (R)-4'-phosphopantothenate + ADP + H(+). It functions in the pathway cofactor biosynthesis; coenzyme A biosynthesis; CoA from (R)-pantothenate: step 1/5. This chain is Pantothenate kinase (coaA), found in Streptococcus pyogenes serotype M3 (strain ATCC BAA-595 / MGAS315).